The following is an 855-amino-acid chain: Envelope glycoprotein gp160 (855 aa).

The signal sequence occupies residues 1-31 (MTARGTRKNYQRLWRWGTMLLGMLMICSAAE). The Extracellular segment spans residues 32 to 683 (NLWVTVYYGV…ITNWLWYIRI (652 aa)). An intrachain disulfide couples Cys53 to Cys73. N-linked (GlcNAc...) asparagine; by host glycans are attached at residues Asn87, Asn134, Asn142, Asn145, Asn161, Asn165, Asn192, Asn202, Asn239, Asn246, Asn267, Asn281, Asn294, Asn300, Asn306, Asn336, and Asn359. 5 disulfide bridges follow: Cys118/Cys210, Cys125/Cys201, Cys130/Cys162, Cys223/Cys252, and Cys233/Cys244. The segment at 130 to 161 (CTDVNTTSSSLRNATNTTSSSWETMEKGELKN) is V1. Residues 162–201 (CSFNTTTSIRDKMQEQYALFYKLDVLPIDKNDTKFRLIHC) form a V2 region. The V3 stretch occupies residues 301–334 (CTRPNNNTRNRISIGPGRAFHTTKQIIGDIRQAH). Cys301 and Cys335 are oxidised to a cystine. Residues 367-377 (SSGGDPEIVMH) are CD4-binding loop. Disulfide bonds link Cys381/Cys442 and Cys388/Cys415. Residues 388-415 (CNTSQLFNSTWNDTTRANSTEVTITLPC) are V4. N-linked (GlcNAc...) asparagine; by host glycosylation is found at Asn389, Asn395, Asn399, Asn405, and Asn458. V5 regions lie at residues 458–469 (NTTNGIEIFRPA) and 460–469 (TNGIEIFRPA). Residues 510 to 531 (AVGMLGAMFLGFLGAAGSTMGA) are fusion peptide. The immunosuppression stretch occupies residues 573 to 591 (KQLQARVLAVERYLKDQQL). A disulfide bond links Cys597 and Cys603. Asn610, Asn615, Asn624, and Asn636 each carry an N-linked (GlcNAc...) asparagine; by host glycan. Positions 632 to 666 (REIDNYTHLIYTLIEESQNQQEKNEQELLELDKWA) form a coiled coil. An MPER; binding to GalCer region spans residues 661–682 (ELDKWAGLWSWFSITNWLWYIR). The chain crosses the membrane as a helical span at residues 684-704 (FIIIVGGLVGLRIVFAVLSIV). Residues 705 to 855 (NRVRQGYSPL…IRQGLERALL (151 aa)) lie on the Cytoplasmic side of the membrane. The short motif at 711–714 (YSPL) is the YXXL motif; contains endocytosis signal element. Residues 718-742 (TRLPTQRGPDRPEGIEEEGGERDRD) form a disordered region. A lipid anchor (S-palmitoyl cysteine; by host) is attached at Cys763. Positions 854-855 (LL) match the Di-leucine internalization motif motif.

The protein belongs to the HIV-1 env protein family. In terms of assembly, the mature envelope protein (Env) consists of a homotrimer of non-covalently associated gp120-gp41 heterodimers. The resulting complex protrudes from the virus surface as a spike. There seems to be as few as 10 spikes on the average virion. Interacts with host CD4, CCR5 and CXCR4. Gp120 also interacts with the C-type lectins CD209/DC-SIGN and CLEC4M/DC-SIGNR (collectively referred to as DC-SIGN(R)). Gp120 and gp41 interact with GalCer. Gp120 interacts with host ITGA4/ITGB7 complex; on CD4+ T-cells, this interaction results in rapid activation of integrin ITGAL/LFA-1, which facilitates efficient cell-to-cell spreading of HIV-1. Gp120 interacts with cell-associated heparan sulfate; this interaction increases virus infectivity on permissive cells and may be involved in infection of CD4- cells. As to quaternary structure, the mature envelope protein (Env) consists of a homotrimer of non-covalently associated gp120-gp41 heterodimers. The resulting complex protrudes from the virus surface as a spike. There seems to be as few as 10 spikes on the average virion. Highly glycosylated by host. The high number of glycan on the protein is reffered to as 'glycan shield' because it contributes to hide protein sequence from adaptive immune system. In terms of processing, palmitoylation of the transmembrane protein and of Env polyprotein (prior to its proteolytic cleavage) is essential for their association with host cell membrane lipid rafts. Palmitoylation is therefore required for envelope trafficking to classical lipid rafts, but not for viral replication. Post-translationally, specific enzymatic cleavages in vivo yield mature proteins. Envelope glycoproteins are synthesized as an inactive precursor that is heavily N-glycosylated and processed likely by host cell furin in the Golgi to yield the mature SU and TM proteins. The cleavage site between SU and TM requires the minimal sequence [KR]-X-[KR]-R. About 2 of the 9 disulfide bonds of gp41 are reduced by P4HB/PDI, following binding to CD4 receptor.

Its subcellular location is the virion membrane. The protein localises to the host cell membrane. It localises to the host endosome membrane. Oligomerizes in the host endoplasmic reticulum into predominantly trimers. In a second time, gp160 transits in the host Golgi, where glycosylation is completed. The precursor is then proteolytically cleaved in the trans-Golgi and thereby activated by cellular furin or furin-like proteases to produce gp120 and gp41. Its function is as follows. Attaches the virus to the host lymphoid cell by binding to the primary receptor CD4. This interaction induces a structural rearrangement creating a high affinity binding site for a chemokine coreceptor like CXCR4 and/or CCR5. Acts as a ligand for CD209/DC-SIGN and CLEC4M/DC-SIGNR, which are respectively found on dendritic cells (DCs), and on endothelial cells of liver sinusoids and lymph node sinuses. These interactions allow capture of viral particles at mucosal surfaces by these cells and subsequent transmission to permissive cells. HIV subverts the migration properties of dendritic cells to gain access to CD4+ T-cells in lymph nodes. Virus transmission to permissive T-cells occurs either in trans (without DCs infection, through viral capture and transmission), or in cis (following DCs productive infection, through the usual CD4-gp120 interaction), thereby inducing a robust infection. In trans infection, bound virions remain infectious over days and it is proposed that they are not degraded, but protected in non-lysosomal acidic organelles within the DCs close to the cell membrane thus contributing to the viral infectious potential during DCs' migration from the periphery to the lymphoid tissues. On arrival at lymphoid tissues, intact virions recycle back to DCs' cell surface allowing virus transmission to CD4+ T-cells. Functionally, acts as a class I viral fusion protein. Under the current model, the protein has at least 3 conformational states: pre-fusion native state, pre-hairpin intermediate state, and post-fusion hairpin state. During fusion of viral and target intracellular membranes, the coiled coil regions (heptad repeats) assume a trimer-of-hairpins structure, positioning the fusion peptide in close proximity to the C-terminal region of the ectodomain. The formation of this structure appears to drive apposition and subsequent fusion of viral and target cell membranes. Complete fusion occurs in host cell endosomes and is dynamin-dependent, however some lipid transfer might occur at the plasma membrane. The virus undergoes clathrin-dependent internalization long before endosomal fusion, thus minimizing the surface exposure of conserved viral epitopes during fusion and reducing the efficacy of inhibitors targeting these epitopes. Membranes fusion leads to delivery of the nucleocapsid into the cytoplasm. The protein is Envelope glycoprotein gp160 of Homo sapiens (Human).